A 243-amino-acid chain; its full sequence is MNKNPRLDFSSPSSLATISDSADGELNEDDIFAIDISHAPPQARHSPVSSPAKQQTPARQLQRSKSGLKNVEASGILAALPESSGSSSYLSHVFHHKPAAALSTSVSSTASSSSSSGGGASAGSSSSARAIPTAPKPPQERLPFSASFVGGGKYPQSAPVQVPLVSSAMMNRHKKEFKLTDVVDDDEEEEEGEMLPPHEIVARSLAQSSLLSCSVLEGAGRTLKGRDLRQVRNAVFRRTGFID.

Disordered stretches follow at residues 1–68 (MNKN…KSGL) and 107–143 (SSTA…ERLP). Residues 10-20 (SSPSSLATISD) show a composition bias toward polar residues. Over residues 22–32 (ADGELNEDDIF) the composition is skewed to acidic residues. The segment covering 47–67 (PVSSPAKQQTPARQLQRSKSG) has biased composition (polar residues).

This sequence belongs to the senescence regulator S40 family.

The protein localises to the cytoplasm. The sequence is that of Protein S40-7 from Arabidopsis thaliana (Mouse-ear cress).